A 166-amino-acid polypeptide reads, in one-letter code: Early E3 18.5 kDa glycoprotein (166 aa).

The signal sequence occupies residues 1 to 19 (MGPILVLLVLLSLLEAGSA). At 20 to 131 (NYDPCLDFDP…SKDNIVTFSI (112 aa)) the chain is on the lumenal side. A glycan (N-linked (GlcNAc...) asparagine; by host) is linked at N31. 2 cysteine pairs are disulfide-bonded: C32-C50 and C44-C106. N-linked (GlcNAc...) asparagine; by host glycans are attached at residues N63, N67, and N97. A helical transmembrane segment spans residues 132–152 (AYCLCACLLTALLCVCIHLLV). Residues 153–166 (TTRIKNANNKEKMP) lie on the Cytoplasmic side of the membrane. The short motif at 162–166 (KEKMP) is the Di-lysine motif element.

The protein belongs to the adenoviridae E19 family. Post-translationally, both disulfide bonds are absolutely critical for the interaction with MHC antigens. N-glycosylated; high-mannose.

The protein localises to the host endoplasmic reticulum membrane. Its function is as follows. Binds and retains class I heavy chains in the endoplasmic reticulum during the early period of virus infection, thereby impairing their transport to the cell surface. Also delays the expression of class I alleles that it cannot affect by direct retention. Binds transporters associated with antigen processing (TAP) and acts as a tapasin inhibitor, preventing class I/TAP association. In consequence, infected cells are masked for immune recognition by cytotoxic T-lymphocytes. This is Early E3 18.5 kDa glycoprotein from Human adenovirus B serotype 11 (strain BC34) (HAdV-11).